A 775-amino-acid polypeptide reads, in one-letter code: 5-methyltetrahydropteroyltriglutamate--homocysteine methyltransferase (775 aa).

Residues 16–19 and lysine 115 contribute to the 5-methyltetrahydropteroyltri-L-glutamate site; that span reads REMK. Residues 435 to 437 and glutamate 488 each bind L-homocysteine; that span reads IGS. L-methionine-binding positions include 435–437 and glutamate 488; that span reads IGS. 5-methyltetrahydropteroyltri-L-glutamate is bound by residues 519 to 520 and tryptophan 565; that span reads RC. Aspartate 603 is a binding site for L-homocysteine. Aspartate 603 is a binding site for L-methionine. Residue glutamate 609 participates in 5-methyltetrahydropteroyltri-L-glutamate binding. Residues histidine 645, cysteine 647, and glutamate 669 each coordinate Zn(2+). Residue histidine 698 is the Proton donor of the active site. Cysteine 730 serves as a coordination point for Zn(2+).

The protein belongs to the vitamin-B12 independent methionine synthase family. Zn(2+) is required as a cofactor.

The catalysed reaction is 5-methyltetrahydropteroyltri-L-glutamate + L-homocysteine = tetrahydropteroyltri-L-glutamate + L-methionine. It participates in amino-acid biosynthesis; L-methionine biosynthesis via de novo pathway; L-methionine from L-homocysteine (MetE route): step 1/1. Its function is as follows. Catalyzes the transfer of a methyl group from 5-methyltetrahydrofolate to homocysteine resulting in methionine formation. The polypeptide is 5-methyltetrahydropteroyltriglutamate--homocysteine methyltransferase (Coxiella burnetii (strain CbuK_Q154) (Coxiella burnetii (strain Q154))).